The primary structure comprises 138 residues: Histone H2B (138 aa).

Residues 1–10 show a composition bias toward basic and acidic residues; it reads MPPKAAEKKP. Residues 1-47 form a disordered region; that stretch reads MPPKAAEKKPSTAGKAPAGKAPEKKEAGKKTTAAGGEKKKRSKTRKE. N6-acetyllysine; alternate is present on residues lysine 8 and lysine 9. Residues lysine 8 and lysine 9 each participate in a glycyl lysine isopeptide (Lys-Gly) (interchain with G-Cter in SUMO); alternate cross-link. The span at 11 to 20 shows a compositional bias: low complexity; that stretch reads STAGKAPAGK. An N6-acetyllysine modification is found at lysine 15. Lysine 24 bears the N6-acetyllysine; alternate mark. Residue lysine 24 forms a Glycyl lysine isopeptide (Lys-Gly) (interchain with G-Cter in SUMO); alternate linkage. Lysine 25 is covalently cross-linked (Glycyl lysine isopeptide (Lys-Gly) (interchain with G-Cter in SUMO)). Lysine 132 is covalently cross-linked (Glycyl lysine isopeptide (Lys-Gly) (interchain with G-Cter in ubiquitin)).

The protein belongs to the histone H2B family. The nucleosome is a histone octamer containing two molecules each of H2A, H2B, H3 and H4 assembled in one H3-H4 heterotetramer and two H2A-H2B heterodimers. The octamer wraps approximately 147 bp of DNA. Post-translationally, monoubiquitinated to form H2BK123ub1. H2BK123ub1 gives a specific tag for epigenetic transcriptional activation and is also prerequisite for H3K4me and H3K79me formation. H2BK123ub1 also modulates the formation of double-strand breaks during meiosis and is a prerequisite for DNA-damage checkpoint activation. Acetylated by GCN5 to form H2BK11ac and H2BK16ac. H2BK16ac can also be formed by ESA1. Acetylation of N-terminal lysines and particularly formation of H2BK11acK16ac has a positive effect on transcription. In terms of processing, sumoylation to form H2BK6su or H2BK7su, and probably also H2BK16su or H2BK17su, occurs preferentially near the telomeres and represses gene transcription.

It localises to the nucleus. The protein localises to the chromosome. Core component of nucleosome. Nucleosomes wrap and compact DNA into chromatin, limiting DNA accessibility to the cellular machineries which require DNA as a template. Histones thereby play a central role in transcription regulation, DNA repair, DNA replication and chromosomal stability. DNA accessibility is regulated via a complex set of post-translational modifications of histones, also called histone code, and nucleosome remodeling. This chain is Histone H2B (HTB1), found in Ajellomyces capsulatus (Darling's disease fungus).